The following is a 408-amino-acid chain: Guanine nucleotide-binding protein alpha-14 subunit (408 aa).

GTP is bound by residues 39 to 46, 79 to 86, 201 to 205, 216 to 222, 241 to 245, 285 to 288, 325 to 328, and Ala380; these read HSEELEAK, GGPLSGKS, TRIAD, VHSRKAT, DVGGQ, FPKF, and NKVD. The 338-residue stretch at 71 to 408 folds into the G-alpha domain; that stretch reads SHIKILILGG…KANAKATGLS (338 aa). The segment at 74–87 is G1 motif; that stretch reads KILILGGPLSGKST. Mg(2+) is bound at residue Ser86. The segment at 214 to 222 is G2 motif; sequence DIVHSRKAT. Position 222 (Thr222) interacts with Mg(2+). The tract at residues 237 to 246 is G3 motif; it reads LLMIDVGGQR. The tract at residues 321–328 is G4 motif; that stretch reads LLFFNKVD. Residues 378–383 form a G5 motif region; the sequence is TTATNT.

Belongs to the G-alpha family. G proteins are composed of 3 units; alpha, beta and gamma. The alpha chain contains the guanine nucleotide binding site. Interacts with the dopamine receptor dop-2 (via C-terminus); the interaction is direct.

In terms of biological role, guanine nucleotide-binding proteins (G proteins) are involved as modulators or transducers in various transmembrane signaling systems. In association with the G-protein coupled dopamine receptor dop-2, modulates two types of learning: touch habituation and chemosensory associative conditioning. This chain is Guanine nucleotide-binding protein alpha-14 subunit, found in Caenorhabditis elegans.